The primary structure comprises 137 residues: 6,7-dimethyl-8-ribityllumazine synthase (137 aa).

5-amino-6-(D-ribitylamino)uracil contacts are provided by residues phenylalanine 11, 43–45 (SFD), and 67–69 (CVI). A (2S)-2-hydroxy-3-oxobutyl phosphate-binding site is contributed by 72 to 73 (DT). The active-site Proton donor is histidine 75. Leucine 100 is a 5-amino-6-(D-ribitylamino)uracil binding site. A (2S)-2-hydroxy-3-oxobutyl phosphate-binding site is contributed by arginine 115.

Belongs to the DMRL synthase family. As to quaternary structure, forms an icosahedral capsid composed of 60 subunits, arranged as a dodecamer of pentamers.

The catalysed reaction is (2S)-2-hydroxy-3-oxobutyl phosphate + 5-amino-6-(D-ribitylamino)uracil = 6,7-dimethyl-8-(1-D-ribityl)lumazine + phosphate + 2 H2O + H(+). Its pathway is cofactor biosynthesis; riboflavin biosynthesis; riboflavin from 2-hydroxy-3-oxobutyl phosphate and 5-amino-6-(D-ribitylamino)uracil: step 1/2. Functionally, catalyzes the formation of 6,7-dimethyl-8-ribityllumazine by condensation of 5-amino-6-(D-ribitylamino)uracil with 3,4-dihydroxy-2-butanone 4-phosphate. This is the penultimate step in the biosynthesis of riboflavin. This Methanococcus maripaludis (strain C6 / ATCC BAA-1332) protein is 6,7-dimethyl-8-ribityllumazine synthase.